The chain runs to 558 residues: Factor VII-activating protease (558 aa).

Positions Met-1–Gly-23 are cleaved as a signal peptide. 3 consecutive EGF-like domains span residues Asp-71 to Gln-107, Ala-109 to Ser-146, and Val-148 to Glu-186. Disulfide bonds link Cys-75–Cys-86, Cys-80–Cys-95, Cys-97–Cys-106, Cys-113–Cys-123, Cys-118–Cys-134, Cys-136–Cys-145, Cys-152–Cys-163, Cys-157–Cys-174, Cys-176–Cys-185, Cys-192–Cys-274, Cys-213–Cys-255, Cys-244–Cys-269, Cys-299–Cys-433, Cys-345–Cys-361, Cys-353–Cys-422, Cys-445–Cys-513, Cys-475–Cys-491, and Cys-503–Cys-531. The 84-residue stretch at Asp-191 to Cys-274 folds into the Kringle domain. Residues Ile-312–His-553 enclose the Peptidase S1 domain. Residues His-360 and Asp-409 each act as charge relay system in the active site. The Charge relay system role is filled by Ser-507.

The protein belongs to the peptidase S1 family. In terms of assembly, heterodimer; disulfide-linked. Heterodimer of a 50 kDa heavy and a 27 kDa light chain linked by a disulfide bond. In terms of processing, proteolytic cleavage at Gly-23 or Met-27 can give rise to the 50 kDa heavy chain (HC) and cleavage at Arg-311 or Lys-317 can give rise to the 27 kDa light chain (LC). The HC can undergo further proteolytic cleavage giving rise to a 26 kDa fragment. The LC can undergo further proteolytic cleavage at Arg-311 leading to a 17-kDa fragment and at Arg-478 leading to a 8-kDa fragment. Liver and kidney.

The protein resides in the secreted. Functionally, cleaves the alpha-chain at multiple sites and the beta-chain between 'Lys-53' and 'Lys-54' but not the gamma-chain of fibrinogen and therefore does not initiate the formation of the fibrin clot and does not cause the fibrinolysis directly. It does not cleave (activate) prothrombin and plasminogen but converts the inactive single chain urinary plasminogen activator (pro-urokinase) to the active two chain form. Activates coagulation factor VII. May function as a tumor suppressor negatively regulating cell proliferation and cell migration. This chain is Factor VII-activating protease, found in Mus musculus (Mouse).